We begin with the raw amino-acid sequence, 81 residues long: Large ribosomal subunit protein bL31B (81 aa).

The protein belongs to the bacterial ribosomal protein bL31 family. Type B subfamily. As to quaternary structure, part of the 50S ribosomal subunit.

This chain is Large ribosomal subunit protein bL31B, found in Listeria innocua serovar 6a (strain ATCC BAA-680 / CLIP 11262).